The primary structure comprises 259 residues: Type III pantothenate kinase (259 aa).

ATP is bound at residue 6–13 (DVGNTNCT). Substrate is bound at residue 107-110 (GSDR). D109 serves as the catalytic Proton acceptor. Residue D129 participates in K(+) binding. Residue T132 coordinates ATP. T184 provides a ligand contact to substrate.

This sequence belongs to the type III pantothenate kinase family. In terms of assembly, homodimer. Requires NH4(+) as cofactor. K(+) serves as cofactor.

It localises to the cytoplasm. The enzyme catalyses (R)-pantothenate + ATP = (R)-4'-phosphopantothenate + ADP + H(+). The protein operates within cofactor biosynthesis; coenzyme A biosynthesis; CoA from (R)-pantothenate: step 1/5. In terms of biological role, catalyzes the phosphorylation of pantothenate (Pan), the first step in CoA biosynthesis. The polypeptide is Type III pantothenate kinase (Listeria welshimeri serovar 6b (strain ATCC 35897 / DSM 20650 / CCUG 15529 / CIP 8149 / NCTC 11857 / SLCC 5334 / V8)).